Here is a 202-residue protein sequence, read N- to C-terminus: NADH-quinone oxidoreductase subunit C (202 aa).

Belongs to the complex I 30 kDa subunit family. In terms of assembly, NDH-1 is composed of 14 different subunits. Subunits NuoB, C, D, E, F, and G constitute the peripheral sector of the complex.

The protein resides in the cell inner membrane. It carries out the reaction a quinone + NADH + 5 H(+)(in) = a quinol + NAD(+) + 4 H(+)(out). Its function is as follows. NDH-1 shuttles electrons from NADH, via FMN and iron-sulfur (Fe-S) centers, to quinones in the respiratory chain. The immediate electron acceptor for the enzyme in this species is believed to be ubiquinone. Couples the redox reaction to proton translocation (for every two electrons transferred, four hydrogen ions are translocated across the cytoplasmic membrane), and thus conserves the redox energy in a proton gradient. This chain is NADH-quinone oxidoreductase subunit C, found in Brucella canis (strain ATCC 23365 / NCTC 10854 / RM-666).